The primary structure comprises 457 residues: Nuclear hormone receptor family member odr-7 (457 aa).

2 disordered regions span residues 57–95 (EQPN…DNDA) and 230–252 (KQES…LQQP). Positions 327–407 (LHDCQVCLST…IGMLPENVQH (81 aa)) form a DNA-binding region, nuclear receptor. 2 NR C4-type zinc fingers span residues 330–351 (CQVC…CAAC) and 367–395 (CKRN…MKRC). The interval 435 to 457 (QPSGSAAQPITVSSSESPRHTTN) is disordered.

The protein belongs to the nuclear hormone receptor family. NR0 subfamily. As to quaternary structure, heterodimer with a partner that confers DNA binding capacity or a nuclear hormone receptor whose DNA binding it inhibits. In terms of tissue distribution, expressed predominantly in the AWA neurons.

It localises to the nucleus. The protein resides in the cytoplasm. Its subcellular location is the perinuclear region. In terms of biological role, required for the function of one pair of chemosensory neurons called AWA neurons that are involved in chemotaxis to volatile odorants. Acts in a pathway that specifies olfactory neuronal fate. Regulates the transcription of olfactory signaling molecules such as odr-10 that specify AWA neuron identity and function. Represses the expression in AWA neurons of factors such as str-2 which specify AWC neuron identity. This Caenorhabditis elegans protein is Nuclear hormone receptor family member odr-7 (odr-7).